The sequence spans 189 residues: Blue copper protein (189 aa).

An N-terminal signal peptide occupies residues 1–24 (MAFSNALVLCFLLAIINMALPSLA). A Phytocyanin domain is found at 25–124 (TVYTVGDTSG…GMKLSIKVKA (100 aa)). Residues H65, C106, and H111 each coordinate Cu cation. C78 and C106 are joined by a disulfide. A compositionally biased stretch (low complexity) spans 127–160 (GSSAAPSATPSSSGKGSPSSDDTPAATTTTTTPT). The tract at residues 127–165 (GSSAAPSATPSSSGKGSPSSDDTPAATTTTTTPTKQNES) is disordered. An N-linked (GlcNAc...) asparagine glycan is attached at N163.

This Pisum sativum (Garden pea) protein is Blue copper protein.